Reading from the N-terminus, the 497-residue chain is B3 domain-containing protein REM1 (497 aa).

3 consecutive DNA-binding regions (TF-B3) follow at residues 7 to 92 (PSLF…SSES), 142 to 239 (FLRA…LCSH), and 278 to 379 (FLTQ…HSKI). The interval 87-135 (AVSSESDDDESDDTDDSESDDESNDTDDSESDDSEDNGEGDSSLVNKEA) is disordered. The span at 91–125 (ESDDDESDDTDDSESDDESNDTDDSESDDSEDNGE) shows a compositional bias: acidic residues.

Specifically expressed in the reproductive meristem.

It localises to the nucleus. Functionally, may play a role in flower development. In Brassica oleracea var. botrytis (Cauliflower), this protein is B3 domain-containing protein REM1 (REM1).